We begin with the raw amino-acid sequence, 60 residues long: Potassium channel toxin alpha-KTx 12.7 (60 aa).

The signal sequence occupies residues 1-22; sequence MSNMPVLIITLLLFSMYISTAA. 3 disulfide bridges follow: Cys30-Cys51, Cys36-Cys56, and Cys40-Cys58.

It belongs to the short scorpion toxin superfamily. Potassium channel inhibitor family. Alpha-KTx 12 subfamily. As to expression, expressed by the venom gland.

It localises to the secreted. In terms of biological role, inhibits voltage-gated potassium channels. The chain is Potassium channel toxin alpha-KTx 12.7 from Lychas mucronatus (Chinese swimming scorpion).